We begin with the raw amino-acid sequence, 108 residues long: Iron-sulfur cluster assembly protein CyaY (108 aa).

Belongs to the frataxin family.

In terms of biological role, involved in iron-sulfur (Fe-S) cluster assembly. May act as a regulator of Fe-S biogenesis. The chain is Iron-sulfur cluster assembly protein CyaY from Pseudomonas paraeruginosa (strain DSM 24068 / PA7) (Pseudomonas aeruginosa (strain PA7)).